The chain runs to 1637 residues: Glutamate rich 3 (1637 aa).

6 disordered regions span residues 145 to 192 (PLTL…GSLL), 408 to 453 (PSST…KESC), 478 to 814 (EWKG…QDAG), 1111 to 1194 (VGTS…SPRE), 1238 to 1445 (IEKV…SGER), and 1457 to 1637 (KAEN…RETA). Over residues 169–185 (LLSSRQTRNGSKITSGS) the composition is skewed to polar residues. 3 stretches are compositionally biased toward basic and acidic residues: residues 416-426 (EKITEKKEEPP), 443-452 (KRNEMERKES), and 478-487 (EWKGKSGRDV). A compositionally biased stretch (acidic residues) spans 500-523 (YEEDFEVDDEKQDEKVDEDEDQAD). The span at 534–557 (TESEKDNRNPEKKIETSSEKAHDS) shows a compositional bias: basic and acidic residues. Positions 558-572 (ENEDTGCSDSEEDDR) are enriched in acidic residues. Composition is skewed to low complexity over residues 579–590 (SSISSRSHPYSS) and 608–617 (EEGSSRSSSS). Composition is skewed to basic and acidic residues over residues 619 to 638 (DLRENDDPGKPHFPIEKYLE), 677 to 693 (ESEHKEPRRVASSEVRA), 769 to 802 (QEMHTLKEEAMKKDESSQPEDTDAHAGVREESGM), 1115 to 1130 (EVKEAEREVGSPKTDG), 1264 to 1307 (LKTE…KDVE), 1319 to 1329 (KLLEDPPKERA), 1342 to 1357 (SPKESEATATEHKGGE), and 1402 to 1412 (RCEEWAAKELD). The segment covering 1476 to 1487 (VTGSLTGQNWNM) has biased composition (polar residues). 3 stretches are compositionally biased toward basic and acidic residues: residues 1550–1568 (AEERTGTEDMAPRTEKVAV), 1589–1599 (AQDREGGETKA), and 1614–1637 (GKDEEHQSGAAEEFRESVSQRETA).

It localises to the cell projection. The protein localises to the cilium. Its subcellular location is the cytoplasm. In terms of biological role, component of the primary cilium that controls cilium formation and length. May function within retrograde intraflagellar transport (IFT)-associated pathways to remove signaling proteins from primary cilia. Also involved in neuronal vesicle biogenesis and neurotransmitter vesicular function. This chain is Glutamate rich 3, found in Mus musculus (Mouse).